We begin with the raw amino-acid sequence, 408 residues long: MANINENYLKLKAGYLFPEISKRVKTYSEKNPSAKIIRLGIGDVTLPIVPSVVDAMIAASKEMGTAGGFHGYGPEQGYSFLLKSIANNDYGSLGIKIDESEIFVSDGSKCDCGNIQEIFSTDAKIAVSDPVYPVYVDTNVMAGRTGEIGADGRYSNLIYMPATKENGFQPEIPKEKADIIYLCYPNNPTGTVTTKKALRAWVEYAKKNNSIILYDSAYEAFISEPGVPRSIYEVAGAKEVAIEFRSFSKTAGFTGLRCAYIVIPKELKGRTRGGEEVSINSLWSRRHTTKFNGVSYVTQKGAEACYSPQGKKEIQASIAYYMSNAAKIREGLKKAGYEVFGGVNAPYIWLKTSDNLSSWDFFDRLLDKAQVVGTPGSGFGPAGEGYFRLSAFGKKEDVEEAIARISFL.

Positions 15 and 42 each coordinate substrate. Pyridoxal 5'-phosphate contacts are provided by residues tyrosine 72, 108-109, tyrosine 132, asparagine 187, tyrosine 218, and 246-248; these read SK and SFS. Positions 109, 132, and 187 each coordinate substrate. At lysine 249 the chain carries N6-(pyridoxal phosphate)lysine. Pyridoxal 5'-phosphate-binding residues include arginine 257 and asparagine 292. Substrate contacts are provided by asparagine 292 and arginine 388.

This sequence belongs to the class-I pyridoxal-phosphate-dependent aminotransferase family. LL-diaminopimelate aminotransferase subfamily. Homodimer. The cofactor is pyridoxal 5'-phosphate.

The catalysed reaction is (2S,6S)-2,6-diaminopimelate + 2-oxoglutarate = (S)-2,3,4,5-tetrahydrodipicolinate + L-glutamate + H2O + H(+). Its pathway is amino-acid biosynthesis; L-lysine biosynthesis via DAP pathway; LL-2,6-diaminopimelate from (S)-tetrahydrodipicolinate (aminotransferase route): step 1/1. Its function is as follows. Involved in the synthesis of meso-diaminopimelate (m-DAP or DL-DAP), required for both lysine and peptidoglycan biosynthesis. Catalyzes the direct conversion of tetrahydrodipicolinate to LL-diaminopimelate. This is LL-diaminopimelate aminotransferase from Leptospira borgpetersenii serovar Hardjo-bovis (strain L550).